The primary structure comprises 105 residues: ESAT-6-like protein EsxU (105 aa).

This sequence belongs to the WXG100 family. CFP-10 subfamily. In terms of assembly, forms a tight 1:1 complex with EsxT. Complex formation results in induction of alpha-helical conformation and stability against chemical denaturation.

It is found in the secreted. The polypeptide is ESAT-6-like protein EsxU (Mycobacterium tuberculosis (strain ATCC 25618 / H37Rv)).